A 315-amino-acid chain; its full sequence is Ribose-phosphate pyrophosphokinase (315 aa).

ATP-binding positions include Asp37 to Glu39 and Arg96 to Gln97. 2 residues coordinate Mg(2+): His131 and Asp170. Lys194 is a catalytic residue. Residues Arg196, Asp220, and Asp224 to Thr228 contribute to the D-ribose 5-phosphate site.

The protein belongs to the ribose-phosphate pyrophosphokinase family. Class I subfamily. Homohexamer. The cofactor is Mg(2+).

Its subcellular location is the cytoplasm. It carries out the reaction D-ribose 5-phosphate + ATP = 5-phospho-alpha-D-ribose 1-diphosphate + AMP + H(+). It participates in metabolic intermediate biosynthesis; 5-phospho-alpha-D-ribose 1-diphosphate biosynthesis; 5-phospho-alpha-D-ribose 1-diphosphate from D-ribose 5-phosphate (route I): step 1/1. In terms of biological role, involved in the biosynthesis of the central metabolite phospho-alpha-D-ribosyl-1-pyrophosphate (PRPP) via the transfer of pyrophosphoryl group from ATP to 1-hydroxyl of ribose-5-phosphate (Rib-5-P). The chain is Ribose-phosphate pyrophosphokinase from Shewanella oneidensis (strain ATCC 700550 / JCM 31522 / CIP 106686 / LMG 19005 / NCIMB 14063 / MR-1).